Here is a 508-residue protein sequence, read N- to C-terminus: Glycerol kinase (508 aa).

Residue Thr-14 coordinates ADP. Thr-14, Thr-15, and Ser-16 together coordinate ATP. Thr-14 is a binding site for sn-glycerol 3-phosphate. Position 18 (Arg-18) interacts with ADP. Sn-glycerol 3-phosphate is bound by residues Arg-84, Glu-85, and Tyr-136. Residues Arg-84, Glu-85, and Tyr-136 each coordinate glycerol. At His-232 the chain carries Phosphohistidine; by HPr. Residue Asp-246 participates in sn-glycerol 3-phosphate binding. Residues Asp-246 and Gln-247 each contribute to the glycerol site. Positions 268 and 311 each coordinate ADP. 4 residues coordinate ATP: Thr-268, Gly-311, Gln-315, and Gly-412. ADP contacts are provided by Gly-412 and Asn-416.

Belongs to the FGGY kinase family. As to quaternary structure, homotetramer and homodimer (in equilibrium). Post-translationally, the phosphoenolpyruvate-dependent sugar phosphotransferase system (PTS), including enzyme I, and histidine-containing protein (HPr) are required for the phosphorylation, which leads to the activation of the enzyme.

It carries out the reaction glycerol + ATP = sn-glycerol 3-phosphate + ADP + H(+). The protein operates within polyol metabolism; glycerol degradation via glycerol kinase pathway; sn-glycerol 3-phosphate from glycerol: step 1/1. Its activity is regulated as follows. Activated by phosphorylation and inhibited by fructose 1,6-bisphosphate (FBP). In terms of biological role, key enzyme in the regulation of glycerol uptake and metabolism. Catalyzes the phosphorylation of glycerol to yield sn-glycerol 3-phosphate. The protein is Glycerol kinase of Streptococcus pyogenes serotype M4 (strain MGAS10750).